We begin with the raw amino-acid sequence, 393 residues long: Branched-chain-amino-acid aminotransferase, mitochondrial (393 aa).

The N-terminal 27 residues, 1–27 (MATAALRQIWIPRFLPVPWFLCGSRRY), are a transit peptide targeting the mitochondrion. Tyr169 contributes to the substrate binding site. Lys230 carries the post-translational modification N6-(pyridoxal phosphate)lysine. Position 322 is an N6-acetyllysine (Lys322).

It belongs to the class-IV pyridoxal-phosphate-dependent aminotransferase family. In terms of assembly, homodimer. Requires pyridoxal 5'-phosphate as cofactor.

It is found in the mitochondrion. It carries out the reaction L-leucine + 2-oxoglutarate = 4-methyl-2-oxopentanoate + L-glutamate. It catalyses the reaction L-isoleucine + 2-oxoglutarate = (S)-3-methyl-2-oxopentanoate + L-glutamate. The catalysed reaction is L-valine + 2-oxoglutarate = 3-methyl-2-oxobutanoate + L-glutamate. In terms of biological role, catalyzes the first reaction in the catabolism of the essential branched chain amino acids leucine, isoleucine, and valine. May also function as a transporter of branched chain alpha-keto acids. This Bos taurus (Bovine) protein is Branched-chain-amino-acid aminotransferase, mitochondrial (BCAT2).